A 181-amino-acid chain; its full sequence is Large ribosomal subunit protein uL10 (181 aa).

The protein belongs to the universal ribosomal protein uL10 family. As to quaternary structure, part of the ribosomal stalk of the 50S ribosomal subunit. The N-terminus interacts with L11 and the large rRNA to form the base of the stalk. The C-terminus forms an elongated spine to which L12 dimers bind in a sequential fashion forming a multimeric L10(L12)X complex.

Forms part of the ribosomal stalk, playing a central role in the interaction of the ribosome with GTP-bound translation factors. This is Large ribosomal subunit protein uL10 from Nostoc sp. (strain PCC 7120 / SAG 25.82 / UTEX 2576).